A 289-amino-acid chain; its full sequence is Formamidopyrimidine-DNA glycosylase (289 aa).

The active-site Schiff-base intermediate with DNA is proline 2. The Proton donor role is filled by glutamate 3. The active-site Proton donor; for beta-elimination activity is lysine 61. Residues histidine 96, arginine 115, and lysine 161 each contribute to the DNA site. The segment at 247 to 281 adopts an FPG-type zinc-finger fold; it reads SAYGQEDRPCPRCGTAIRREKFMNRSSFSCPKCQR. Residue arginine 271 is the Proton donor; for delta-elimination activity of the active site.

It belongs to the FPG family. As to quaternary structure, monomer. Requires Zn(2+) as cofactor.

It catalyses the reaction Hydrolysis of DNA containing ring-opened 7-methylguanine residues, releasing 2,6-diamino-4-hydroxy-5-(N-methyl)formamidopyrimidine.. It carries out the reaction 2'-deoxyribonucleotide-(2'-deoxyribose 5'-phosphate)-2'-deoxyribonucleotide-DNA = a 3'-end 2'-deoxyribonucleotide-(2,3-dehydro-2,3-deoxyribose 5'-phosphate)-DNA + a 5'-end 5'-phospho-2'-deoxyribonucleoside-DNA + H(+). In terms of biological role, involved in base excision repair of DNA damaged by oxidation or by mutagenic agents. Acts as a DNA glycosylase that recognizes and removes damaged bases. Has a preference for oxidized purines, such as 7,8-dihydro-8-oxoguanine (8-oxoG). Has AP (apurinic/apyrimidinic) lyase activity and introduces nicks in the DNA strand. Cleaves the DNA backbone by beta-delta elimination to generate a single-strand break at the site of the removed base with both 3'- and 5'-phosphates. This is Formamidopyrimidine-DNA glycosylase from Rhodococcus opacus (strain B4).